A 502-amino-acid chain; its full sequence is Glucose-6-phosphate isomerase (502 aa).

The Proton donor role is filled by E331. Catalysis depends on residues H362 and K471.

It belongs to the GPI family.

The protein resides in the cytoplasm. The enzyme catalyses alpha-D-glucose 6-phosphate = beta-D-fructose 6-phosphate. It functions in the pathway carbohydrate biosynthesis; gluconeogenesis. Its pathway is carbohydrate degradation; glycolysis; D-glyceraldehyde 3-phosphate and glycerone phosphate from D-glucose: step 2/4. Catalyzes the reversible isomerization of glucose-6-phosphate to fructose-6-phosphate. The chain is Glucose-6-phosphate isomerase from Xylella fastidiosa (strain 9a5c).